The primary structure comprises 343 residues: Putative adenosine/adenine deaminase (343 aa).

Positions 16, 18, and 204 each coordinate Zn(2+). His-18 is a substrate binding site. The active-site Proton donor is the Glu-207. Asp-285 serves as a coordination point for Zn(2+). Asp-286 serves as a coordination point for substrate.

Belongs to the metallo-dependent hydrolases superfamily. Adenosine and AMP deaminases family. Requires Zn(2+) as cofactor.

Putative nucleoside deaminase. May catalyze the hydrolytic deamination of adenosine or some similar substrate and play a role in purine metabolism. This chain is Putative adenosine/adenine deaminase, found in Streptomyces coelicolor (strain ATCC BAA-471 / A3(2) / M145).